Here is a 454-residue protein sequence, read N- to C-terminus: Ribosomal protein uS12 methylthiotransferase RimO (454 aa).

Residues 9-124 enclose the MTTase N-terminal domain; it reads PKIGFVSLGC…VMDAVHLHMP (116 aa). [4Fe-4S] cluster contacts are provided by cysteine 18, cysteine 54, cysteine 83, cysteine 155, cysteine 159, and cysteine 162. Residues 141–382 form the Radical SAM core domain; that stretch reads LTPKHFAYLK…MLLQEEISKK (242 aa). Residues 385–454 enclose the TRAM domain; the sequence is QAKVGKTMRV…ADAHDLWAEA (70 aa).

It belongs to the methylthiotransferase family. RimO subfamily. It depends on [4Fe-4S] cluster as a cofactor.

The protein resides in the cytoplasm. The enzyme catalyses L-aspartate(89)-[ribosomal protein uS12]-hydrogen + (sulfur carrier)-SH + AH2 + 2 S-adenosyl-L-methionine = 3-methylsulfanyl-L-aspartate(89)-[ribosomal protein uS12]-hydrogen + (sulfur carrier)-H + 5'-deoxyadenosine + L-methionine + A + S-adenosyl-L-homocysteine + 2 H(+). In terms of biological role, catalyzes the methylthiolation of an aspartic acid residue of ribosomal protein uS12. In Herminiimonas arsenicoxydans, this protein is Ribosomal protein uS12 methylthiotransferase RimO.